Here is a 125-residue protein sequence, read N- to C-terminus: MLSRLLKEHQGKQTERKEAQEKRRKDAIAAATTLTEALVDHLNVGVAQAYVNQRKLDHEVKTLQTQAAQFAKQTTQWISLVENFNQALKEIGDVENWARSIEKDMRIIATALEYVYKGQLQPSAS.

The interval 1 to 24 is disordered; the sequence is MLSRLLKEHQGKQTERKEAQEKRR. Residues 1–25 adopt a coiled-coil conformation; the sequence is MLSRLLKEHQGKQTERKEAQEKRRK.

It belongs to the BLOC1S1 family. Component of the biogenesis of lysosome-related organelles complex 1 (BLOC-1).

The protein resides in the mitochondrion intermembrane space. It localises to the mitochondrion matrix. The protein localises to the cytoplasm. It is found in the cytosol. Its subcellular location is the lysosome membrane. It catalyses the reaction L-lysyl-[protein] + acetyl-CoA = N(6)-acetyl-L-lysyl-[protein] + CoA + H(+). Its function is as follows. Component of the BLOC-1 complex, a complex that is required for normal biogenesis of lysosome-related organelles (LRO), such as platelet dense granules and melanosomes. May also play a role in intracellular vesicle trafficking. As part of a BORC-like complex may play a role in lysosomes movement and localization at the cell periphery. Associated with the cytosolic face of lysosomes, this complex may couple lysosomes to microtubule plus-end-directed kinesin motor. Acts as a protein acetyltransferase. May negatively regulate aerobic respiration through mitochondrial protein lysine-acetylation. The polypeptide is Biogenesis of lysosome-related organelles complex 1 subunit 1 (bloc1s1) (Xenopus tropicalis (Western clawed frog)).